We begin with the raw amino-acid sequence, 306 residues long: 4-hydroxy-tetrahydrodipicolinate synthase (306 aa).

T46 provides a ligand contact to pyruvate. Y134 (proton donor/acceptor) is an active-site residue. K162 acts as the Schiff-base intermediate with substrate in catalysis. V204 contacts pyruvate.

It belongs to the DapA family. Homotetramer; dimer of dimers.

The protein localises to the cytoplasm. It carries out the reaction L-aspartate 4-semialdehyde + pyruvate = (2S,4S)-4-hydroxy-2,3,4,5-tetrahydrodipicolinate + H2O + H(+). It participates in amino-acid biosynthesis; L-lysine biosynthesis via DAP pathway; (S)-tetrahydrodipicolinate from L-aspartate: step 3/4. In terms of biological role, catalyzes the condensation of (S)-aspartate-beta-semialdehyde [(S)-ASA] and pyruvate to 4-hydroxy-tetrahydrodipicolinate (HTPA). This chain is 4-hydroxy-tetrahydrodipicolinate synthase, found in Synechococcus sp. (strain JA-2-3B'a(2-13)) (Cyanobacteria bacterium Yellowstone B-Prime).